The following is a 436-amino-acid chain: Serine--tRNA ligase (436 aa).

Positions Thr43–Val55 are enriched in basic and acidic residues. Residues Thr43–Asp68 are disordered. L-serine is bound at residue Thr237–Glu239. Arg268–Glu270 serves as a coordination point for ATP. Glu291 contacts L-serine. Glu355 to Ser358 is a binding site for ATP. Residue Ser390 participates in L-serine binding.

Belongs to the class-II aminoacyl-tRNA synthetase family. Type-1 seryl-tRNA synthetase subfamily. As to quaternary structure, homodimer. The tRNA molecule binds across the dimer.

It localises to the cytoplasm. The enzyme catalyses tRNA(Ser) + L-serine + ATP = L-seryl-tRNA(Ser) + AMP + diphosphate + H(+). The catalysed reaction is tRNA(Sec) + L-serine + ATP = L-seryl-tRNA(Sec) + AMP + diphosphate + H(+). The protein operates within aminoacyl-tRNA biosynthesis; selenocysteinyl-tRNA(Sec) biosynthesis; L-seryl-tRNA(Sec) from L-serine and tRNA(Sec): step 1/1. Functionally, catalyzes the attachment of serine to tRNA(Ser). Is also able to aminoacylate tRNA(Sec) with serine, to form the misacylated tRNA L-seryl-tRNA(Sec), which will be further converted into selenocysteinyl-tRNA(Sec). The sequence is that of Serine--tRNA ligase from Lactobacillus johnsonii (strain CNCM I-12250 / La1 / NCC 533).